The sequence spans 405 residues: Alpha-1-antiproteinase S (405 aa).

Residues 1-24 (MPSAIPRGLLLLAGLCCLVFGIMA) form the signal peptide. Residues Asn57, Asn94, Asn157, and Asn258 are each glycosylated (N-linked (GlcNAc...) asparagine). Residues 360–379 (GATMMEFMPMSLPEDLSFNK) are RCL.

It belongs to the serpin family.

It is found in the secreted. Its function is as follows. Inhibits elastase, chymotrypsin, cathepsin G, plasmin, and trypsin. The sequence is that of Alpha-1-antiproteinase S from Cavia porcellus (Guinea pig).